The chain runs to 309 residues: Nucleoside kinase (309 aa).

Positions 16, 42, and 46 each coordinate substrate. Gln108 provides a ligand contact to ATP. Substrate-binding positions include 110–112 (SYF) and Gln166. ATP-binding positions include Asn189 and 217 to 223 (KTYGKEG). Asp249 lines the substrate pocket. Asp249 serves as the catalytic Proton acceptor.

It belongs to the carbohydrate kinase PfkB family. Homodimer. The cofactor is Mg(2+).

Catalyzes the phosphorylation of a wide range of nucleosides to yield nucleoside monophosphates, using ATP, ITP or GTP as phosphate donor. The polypeptide is Nucleoside kinase (Methanothermobacter thermautotrophicus (strain ATCC 29096 / DSM 1053 / JCM 10044 / NBRC 100330 / Delta H) (Methanobacterium thermoautotrophicum)).